Reading from the N-terminus, the 504-residue chain is MTTFTKLSDQDTPSIAIHPSRRISKINPNIYAGFTEHMGRCIYGGIYDPGNPLSDENGFRKDVLEALKTLDIPVVRYPGGNFMATYHWIDGVGPKDQRPARPELAWLGTETNQFGTDEFLKWCEVLGTEPYFCLNFGTGTLDEALAWVEYCNGTGNTYYANLRRKNGREEPYNVKYWALGNETWGPWQVEQMTKEAYSHKAYQWAKALKLLDPSLVLILCGQDGTASWDYYTLKHCLLPVNSPLSTSAVPLIDMHSIHLYTSSSSHLPNATAPLAAERAIEITSSLIDLARIENGVPPEQARPTICFDEWNVWDPIRAEGSKGAEECYTLSDALAVAVWLNVFVRKSKDLGMACIAQTVNVISPLMTTKEGITKQTTWWPLYLFSKYMRGWTISAHLASATYEGETSPKWIRGVKETPWLDVSAVLGEDGYVNVAVVNIHEEKAIETTIDGASGEVTVFTVTGDSVAATNMKGKEEVAVVESTWDGQGPYAFPKHSLTLLRWKA.

Residues N152, N181, and N269 are each glycosylated (N-linked (GlcNAc...) asparagine).

It belongs to the glycosyl hydrolase 51 family.

It is found in the secreted. It catalyses the reaction Hydrolysis of terminal non-reducing alpha-L-arabinofuranoside residues in alpha-L-arabinosides.. Its pathway is glycan metabolism; L-arabinan degradation. Alpha-L-arabinofuranosidase involved in the degradation of arabinoxylan, a major component of plant hemicellulose. Acts only on small linear 1,5-alpha-linked L-arabinofuranosyl oligosaccharides. In Aspergillus flavus (strain ATCC 200026 / FGSC A1120 / IAM 13836 / NRRL 3357 / JCM 12722 / SRRC 167), this protein is Probable alpha-L-arabinofuranosidase C (abfC).